Consider the following 150-residue polypeptide: Transcriptional regulator MraZ (150 aa).

SpoVT-AbrB domains are found at residues 7–55 (SHAI…PEPE) and 84–127 (AALM…SEES).

This sequence belongs to the MraZ family. As to quaternary structure, forms oligomers.

It is found in the cytoplasm. Its subcellular location is the nucleoid. The protein is Transcriptional regulator MraZ of Marinobacter nauticus (strain ATCC 700491 / DSM 11845 / VT8) (Marinobacter aquaeolei).